Reading from the N-terminus, the 145-residue chain is Cuticle protein 7 (145 aa).

Residues 41 to 114 (PVNVATSYHA…VASNALPVGP (74 aa)) enclose the Chitin-binding type R&amp;R domain.

The polypeptide is Cuticle protein 7 (Blaberus craniifer (Death's head cockroach)).